Here is a 119-residue protein sequence, read N- to C-terminus: Large ribosomal subunit protein uL18 (119 aa).

The protein belongs to the universal ribosomal protein uL18 family. As to quaternary structure, part of the 50S ribosomal subunit; part of the 5S rRNA/L5/L18/L25 subcomplex. Contacts the 5S and 23S rRNAs.

Its function is as follows. This is one of the proteins that bind and probably mediate the attachment of the 5S RNA into the large ribosomal subunit, where it forms part of the central protuberance. The sequence is that of Large ribosomal subunit protein uL18 from Clostridium perfringens (strain 13 / Type A).